The sequence spans 775 residues: Melanoma-associated antigen D1 (775 aa).

The segment at 37–330 (SEAPPTSQAT…PARQTPSAWQ (294 aa)) is disordered. A compositionally biased stretch (low complexity) spans 39 to 50 (APPTSQATAAAS). Composition is skewed to polar residues over residues 52–63 (PNASPQSSQPPT), 84–100 (KAQNTTTKGPNDYSQAR), 150–180 (GQNTTTKAGPSATYNFTQSPSANEMTNNQPK), 223–237 (AQTSADGSQAQNVES), 250–260 (NNLNVEENSNG), and 297–330 (LAWQNPSGWQNQTARQTPPARQSPPARQTPSAWQ). 19 repeat units span residues 293–298 (WQTPLA), 299–304 (WQNPSG), 305–310 (WQNQTA), 329–334 (WQNPVA), 335–340 (WQNPVI), 341–346 (WPNPVI), 347–352 (WQNPVI), 353–358 (WPNPIV), 359–364 (WPGPIV), 365–370 (WPNPMA), 371–376 (WQSTPG), 377–382 (WQSPPS), 383–388 (WQAPPS), 389–394 (WQSPQD), 395–400 (WQGPPD), 401–406 (WQLPPD), 407–412 (WSMPPD), 413–418 (WSFPSD), and 419–424 (WPFPPD). A 22 X 6 AA tandem repeats of W-[PQ]-X-P-X-X region spans residues 293 to 441 (WQTPLAWQNP…IPPDWQNLRP (149 aa)). A disordered region spans residues 374-407 (TPGWQSPPSWQAPPSWQSPQDWQGPPDWQLPPDW). Residues 375 to 406 (PGWQSPPSWQAPPSWQSPQDWQGPPDWQLPPD) show a composition bias toward low complexity. The 20; approximate repeat unit spans residues 425–429 (WIPAD). 2 tandem repeats follow at residues 430-435 (WPIPPD) and 436-441 (WQNLRP). Residues 437–452 (QNLRPSPNLRSSPNSR) are compositionally biased toward low complexity. Residues 437–463 (QNLRPSPNLRSSPNSRASQNQGPPQPR) form a disordered region. An MAGE domain is found at 468-666 (LQERANKLVK…RDWTAQFMEA (199 aa)).

In terms of assembly, interacts with DLX5, DLX7 and MSX2 and forms homomultimers. Interacts with UNC5A. Interacts with TRIM28 and PJA1. Interacts with NGFR/p75NTR and RORA. As to expression, ubiquitous and in the seminiferous tubules expressed in Sertoli cells but not in germ cells. Expression decreases in all tissues with increased age and is detectable only in brain cortex and lung.

The protein resides in the cytoplasm. Its subcellular location is the cell membrane. The protein localises to the nucleus. Functionally, involved in the apoptotic response after nerve growth factor (NGF) binding in neuronal cells. Inhibits cell cycle progression, and facilitates NGFR-mediated apoptosis. May act as a regulator of the function of DLX family members. May enhance ubiquitin ligase activity of RING-type zinc finger-containing E3 ubiquitin-protein ligases. Proposed to act through recruitment and/or stabilization of the Ubl-conjugating enzyme (E2) at the E3:substrate complex. Plays a role in the circadian rhythm regulation. May act as RORA co-regulator, modulating the expression of core clock genes such as BMAL1 and NFIL3, induced, or NR1D1, repressed. The chain is Melanoma-associated antigen D1 (Maged1) from Rattus norvegicus (Rat).